The following is a 514-amino-acid chain: 2,3-bisphosphoglycerate-independent phosphoglycerate mutase (514 aa).

2 residues coordinate Mn(2+): Asp-14 and Ser-64. Ser-64 serves as the catalytic Phosphoserine intermediate. Residues His-125, 155-156, Arg-187, Arg-193, 263-266, and Lys-336 each bind substrate; these read RD and RADR. Mn(2+)-binding residues include Asp-403, His-407, Asp-444, His-445, and His-463.

The protein belongs to the BPG-independent phosphoglycerate mutase family. Monomer. It depends on Mn(2+) as a cofactor.

It catalyses the reaction (2R)-2-phosphoglycerate = (2R)-3-phosphoglycerate. It participates in carbohydrate degradation; glycolysis; pyruvate from D-glyceraldehyde 3-phosphate: step 3/5. Its function is as follows. Catalyzes the interconversion of 2-phosphoglycerate and 3-phosphoglycerate. This is 2,3-bisphosphoglycerate-independent phosphoglycerate mutase from Shewanella sp. (strain MR-4).